The following is a 185-amino-acid chain: Large ribosomal subunit protein uL5 (185 aa).

Belongs to the universal ribosomal protein uL5 family. In terms of assembly, part of the 50S ribosomal subunit; part of the 5S rRNA/L5/L18/L25 subcomplex. Contacts the 5S rRNA and the P site tRNA. Forms a bridge to the 30S subunit in the 70S ribosome.

This is one of the proteins that bind and probably mediate the attachment of the 5S RNA into the large ribosomal subunit, where it forms part of the central protuberance. In the 70S ribosome it contacts protein S13 of the 30S subunit (bridge B1b), connecting the 2 subunits; this bridge is implicated in subunit movement. Contacts the P site tRNA; the 5S rRNA and some of its associated proteins might help stabilize positioning of ribosome-bound tRNAs. The sequence is that of Large ribosomal subunit protein uL5 from Chelativorans sp. (strain BNC1).